Reading from the N-terminus, the 201-residue chain is 3-isopropylmalate dehydratase small subunit (201 aa).

The protein belongs to the LeuD family. LeuD type 1 subfamily. As to quaternary structure, heterodimer of LeuC and LeuD.

It catalyses the reaction (2R,3S)-3-isopropylmalate = (2S)-2-isopropylmalate. The protein operates within amino-acid biosynthesis; L-leucine biosynthesis; L-leucine from 3-methyl-2-oxobutanoate: step 2/4. Functionally, catalyzes the isomerization between 2-isopropylmalate and 3-isopropylmalate, via the formation of 2-isopropylmaleate. The protein is 3-isopropylmalate dehydratase small subunit of Azorhizobium caulinodans (strain ATCC 43989 / DSM 5975 / JCM 20966 / LMG 6465 / NBRC 14845 / NCIMB 13405 / ORS 571).